Reading from the N-terminus, the 265-residue chain is Inositol-1-monophosphatase (265 aa).

Mg(2+)-binding residues include Glu69, Asp87, Ile89, and Asp90. Glu69 contributes to the substrate binding site. Substrate is bound by residues 89 to 92 (IDGT), Arg185, and Asp214. Position 214 (Asp214) interacts with Mg(2+).

Belongs to the inositol monophosphatase superfamily. The cofactor is Mg(2+).

It catalyses the reaction a myo-inositol phosphate + H2O = myo-inositol + phosphate. The enzyme catalyses a ribonucleoside 5'-phosphate + H2O = a ribonucleoside + phosphate. Its function is as follows. Hydrolyzes myo-inositol monophosphate. Catalyzes the dephosphorylation of GMP and IMP. This is Inositol-1-monophosphatase from Bacillus subtilis (strain 168).